The chain runs to 247 residues: tRNA uridine(34) hydroxylase (247 aa).

The Rhodanese domain maps to 124–218 (TQQDVIVIDT…YLEDTQNKNN (95 aa)). The active-site Cysteine persulfide intermediate is cysteine 178.

The protein belongs to the TrhO family.

It carries out the reaction uridine(34) in tRNA + AH2 + O2 = 5-hydroxyuridine(34) in tRNA + A + H2O. Its function is as follows. Catalyzes oxygen-dependent 5-hydroxyuridine (ho5U) modification at position 34 in tRNAs. This Rickettsia conorii (strain ATCC VR-613 / Malish 7) protein is tRNA uridine(34) hydroxylase.